The chain runs to 107 residues: Integration host factor subunit alpha (107 aa).

This sequence belongs to the bacterial histone-like protein family. Heterodimer of an alpha and a beta chain.

Its function is as follows. This protein is one of the two subunits of integration host factor, a specific DNA-binding protein that functions in genetic recombination as well as in transcriptional and translational control. This is Integration host factor subunit alpha from Brucella anthropi (strain ATCC 49188 / DSM 6882 / CCUG 24695 / JCM 21032 / LMG 3331 / NBRC 15819 / NCTC 12168 / Alc 37) (Ochrobactrum anthropi).